We begin with the raw amino-acid sequence, 292 residues long: tRNA-cytidine(32) 2-sulfurtransferase (292 aa).

Residues 54-59 (SGGKDS) carry the PP-loop motif motif. 3 residues coordinate [4Fe-4S] cluster: cysteine 129, cysteine 132, and cysteine 220.

This sequence belongs to the TtcA family. Homodimer. Mg(2+) serves as cofactor. [4Fe-4S] cluster is required as a cofactor.

Its subcellular location is the cytoplasm. It carries out the reaction cytidine(32) in tRNA + S-sulfanyl-L-cysteinyl-[cysteine desulfurase] + AH2 + ATP = 2-thiocytidine(32) in tRNA + L-cysteinyl-[cysteine desulfurase] + A + AMP + diphosphate + H(+). Its pathway is tRNA modification. Functionally, catalyzes the ATP-dependent 2-thiolation of cytidine in position 32 of tRNA, to form 2-thiocytidine (s(2)C32). The sulfur atoms are provided by the cysteine/cysteine desulfurase (IscS) system. The protein is tRNA-cytidine(32) 2-sulfurtransferase of Cereibacter sphaeroides (strain ATCC 17025 / ATH 2.4.3) (Rhodobacter sphaeroides).